The following is a 397-amino-acid chain: MLNSLDLEGRPEDTRVVVAMSGGVDSSVTAALLKSEGYDVVGITLQLYDHGAATHRKGACCAGQDIHDARNVAERLGIPHYVLDYEDRFRESVIDNFAASYASGETPVPCIECNRAIKFGDLLKTARELGASVLATGHYVASRRLADGSRALVCAADADRDQSYFLFATTREQLDYLRFPLGDMTKPEVRELARRFGLEVADKHDSQDICFVPTGRYTDIIGKLRPNAMEPGEIVDLNGRVLGAHQGIANYTIGQRKGLGIAAGAPLYVVKLDVATRRVVVGPREALRTHRITLREVNWIGDGVLDAAVRDGLELFVRVRSTRPPQPAWLRGADGQYEVELVAGEEGVSPGQACVFYDAASGRARVLGGGFIQSAVAESRTTAGLVRPQRVAEPVRG.

ATP contacts are provided by residues 19 to 26 and L45; that span reads AMSGGVDS. C113 serves as the catalytic Nucleophile. C113 and C210 form a disulfide bridge. Residue G137 participates in ATP binding. The interaction with tRNA stretch occupies residues 160 to 162; the sequence is RDQ. C210 acts as the Cysteine persulfide intermediate in catalysis.

The protein belongs to the MnmA/TRMU family.

The protein resides in the cytoplasm. The catalysed reaction is S-sulfanyl-L-cysteinyl-[protein] + uridine(34) in tRNA + AH2 + ATP = 2-thiouridine(34) in tRNA + L-cysteinyl-[protein] + A + AMP + diphosphate + H(+). Its function is as follows. Catalyzes the 2-thiolation of uridine at the wobble position (U34) of tRNA, leading to the formation of s(2)U34. The polypeptide is tRNA-specific 2-thiouridylase MnmA (Bradyrhizobium sp. (strain BTAi1 / ATCC BAA-1182)).